Reading from the N-terminus, the 720-residue chain is Protein-glutamine gamma-glutamyltransferase 5 (720 aa).

Alanine 2 is subject to N-acetylalanine. Active-site residues include cysteine 278, histidine 337, and aspartate 360. Ca(2+) contacts are provided by asparagine 400, aspartate 402, glutamate 448, and glutamate 453. A disordered region spans residues 470 to 499 (HGSQRGAELQPSRPTSLSQDSPRSLHTPSL). The span at 481-496 (SRPTSLSQDSPRSLHT) shows a compositional bias: polar residues.

This sequence belongs to the transglutaminase superfamily. Transglutaminase family. Ca(2+) serves as cofactor. As to expression, expressed in foreskin keratinocytes.

The protein localises to the cytoplasm. The enzyme catalyses L-glutaminyl-[protein] + L-lysyl-[protein] = [protein]-L-lysyl-N(6)-5-L-glutamyl-[protein] + NH4(+). Functionally, catalyzes the cross-linking of proteins and the conjugation of polyamines to proteins. Contributes to the formation of the cornified cell envelope of keratinocytes. The sequence is that of Protein-glutamine gamma-glutamyltransferase 5 (TGM5) from Homo sapiens (Human).